Reading from the N-terminus, the 677-residue chain is MGSGYQLLQLPRERFRKTSFLVWVIILFQRAISMPLGIVTNSTLKATEIDQLVCRDKLSSTSQLKSVGLNLEGNGIATDVPSATKRWGFRSGVPPKVVSYEAGEWAENCYNLEIKKSDGSECLPLPPDGVRGFPRCRYVHKVQGTGPCPGDLAFHKNGAFFLYDRLASTVIYRGTTFAEGVIAFLILSEPKKHFWKATPAHEPVNTTDDSTSYYMTLTLSYEMSNFGGEESNTLFKVDNHTYVQLDRPHTPQFLVQLNETLRRNNRLSNSTGRLTWTVDPKIEPDVGEWAFWETKKNFSQQLHGENLHFQILSTHTNNSSDQSPAGTVQGKISYHPPTNNSELVPTDSPPVVSVLTAGRTEEMSTQGLTNGETITGFTANPMTTTIAPSPTMTSEVDNNVPSEQPNNTASIEDSPPSASNETIDHSEMNSIQGSNNSAQSPQTKATPAPTASPMTLDPQETANISKPGTSPGSAAGPSQPGLTINTISKVADSLSPTRKQKRSVRQNTANKCNPDLHYWTAVDEGAAAGLAWIPYFGPAAEGIYIEGVMHNQNGLICGLRQLANETTQALQLFLRATTELRTYSLLNRKAIDFLLQRWGGTCRILGPSCCIEPHDWTKNITDEINQIKHDFIDNPLPDHGDDLNLWTGWRQWIPAGIGIIGVIIAIIALLCICKILC.

The first 33 residues, 1–33, serve as a signal peptide directing secretion; sequence MGSGYQLLQLPRERFRKTSFLVWVIILFQRAIS. The Extracellular segment spans residues 34–651; that stretch reads MPLGIVTNST…DLNLWTGWRQ (618 aa). Residue Asn-41 is glycosylated (N-linked (GlcNAc...) asparagine; by host). Intrachain disulfides connect Cys-54–Cys-610, Cys-109–Cys-136, Cys-122–Cys-148, Cys-512–Cys-557, and Cys-602–Cys-609. The receptor-binding stretch occupies residues 55-202; the sequence is RDKLSSTSQL…HFWKATPAHE (148 aa). 12 N-linked (GlcNAc...) asparagine; by host glycosylation sites follow: Asn-205, Asn-239, Asn-258, Asn-269, Asn-297, Asn-317, Asn-318, Asn-339, Asn-406, Asn-420, Asn-435, and Asn-463. The tract at residues 306–486 is mucin-like region; the sequence is NLHFQILSTH…PSQPGLTINT (181 aa). The span at 315 to 326 shows a compositional bias: polar residues; sequence HTNNSSDQSPAG. Disordered stretches follow at residues 315–349, 370–483, and 489–508; these read HTNN…TDSP, NGET…PGLT, and KVAD…RQNT. Composition is skewed to polar residues over residues 370-421, 428-445, and 458-472; these read NGET…ASNE, MNSI…QTKA, and PQET…TSPG. The tract at residues 525-540 is fusion peptide; sequence GAAAGLAWIPYFGPAA. Positions 555–596 form a coiled coil; it reads LICGLRQLANETTQALQLFLRATTELRTYSLLNRKAIDFLLQ. Asn-564 carries N-linked (GlcNAc...) asparagine; by host glycosylation. The stretch at 616-635 forms a coiled coil; that stretch reads WTKNITDEINQIKHDFIDNP. Residue Asn-619 is glycosylated (N-linked (GlcNAc...) asparagine; by host). A helical transmembrane segment spans residues 652 to 672; it reads WIPAGIGIIGVIIAIIALLCI. Residues Cys-671 and Cys-673 are each lipidated (S-palmitoyl cysteine; by host). The Cytoplasmic portion of the chain corresponds to 673 to 677; the sequence is CKILC.

It belongs to the filoviruses glycoprotein family. Homotrimer; each monomer consists of a GP1 and a GP2 subunit linked by disulfide bonds. The resulting peplomers (GP1,2) protrude from the virus surface as spikes. Interacts with host integrin alpha-V/ITGAV. Interacts with host CLEC10A. Binds also to host CD209 and CLEC4M/DC-SIGN(R). Interacts with host FOLR1. Interacts with BST2; this interaction inhibits the antiviral effect of BST2 and this allows viral release from infected cells. Interacts with host FCN1; this interaction enhances viral entry. Interacts with host TLR4; this interaction induces cell death in T-lymphocytes or proinflammatory cytokines and SOCS1 production in monocytes. In terms of assembly, interacts with host entry receptor NPC1. As to quaternary structure, GP1 and GP2delta are part of GP1,2delta soluble complexes released by ectodomain shedding. The signal peptide region modulates GP's high mannose glycosylation, thereby determining the efficiency of the interactions with DC-SIGN(R). In terms of processing, N-glycosylated. Post-translationally, O-glycosylated in the mucin-like region. Palmitoylation of GP2 is not required for its function. In terms of processing, specific enzymatic cleavages in vivo yield mature proteins. The precursor is processed into GP1 and GP2 by host cell furin in the trans Golgi, and maybe by other host proteases, to yield the mature GP1 and GP2 proteins. The cleavage site corresponds to the furin optimal cleavage sequence [KR]-X-[KR]-R. This cleavage does not seem to be required for function. After the internalization of the virus into cell endosomes, GP1 C-terminus is removed by the endosomal proteases cathepsin B, cathepsin L, or both, leaving a 19-kDa N-terminal fragment which is further digested by cathepsin B. Proteolytic processing of GP1,2 by host ADAM17 can remove the transmembrane anchor of GP2 and leads to shedding of complexes consisting in GP1 and truncated GP2 (GP1,2delta).

Its subcellular location is the virion membrane. The protein resides in the host cell membrane. It is found in the secreted. Functionally, trimeric GP1,2 complexes form the virion surface spikes and mediate the viral entry processes, with GP1 acting as the receptor-binding subunit and GP2 as the membrane fusion subunit. At later times of infection, down-regulates the expression of various host cell surface molecules that are essential for immune surveillance and cell adhesion. Down-modulates several integrins including ITGA1, ITGA2, ITGA3, ITGA4, ITGA5, ITGA6, ITGAV and ITGB1. This decrease in cell adhesion molecules may lead to cell detachment, contributing to the disruption of blood vessel integrity and hemorrhages developed during infection (cytotoxicity). Interacts with host TLR4 and thereby stimulates the differentiation and activation of monocytes leading to bystander death of T-lymphocytes. Down-regulates as well the function of host natural killer cells. Counteracts the antiviral effect of host BST2/tetherin that restricts release of progeny virions from infected cells. However, cooperates with VP40 and host BST2 to activate canonical NF-kappa-B pathway in a manner dependent on neddylation. Functions as a decoy for anti-GP1,2 antibodies thereby contributing to viral immune evasion. Interacts and activates host macrophages and dendritic cells inducing up-regulation of cytokine transcription. This effect is mediated throught activation of host TLR4. In terms of biological role, responsible for binding to the receptor(s) on target cells. Interacts with CD209/DC-SIGN and CLEC4M/DC-SIGNR which act as cofactors for virus entry into dendritic cells (DCs) and endothelial cells. Binding to the macrophage specific lectin CLEC10A also seems to enhance virus infectivity. Interaction with FOLR1/folate receptor alpha may be a cofactor for virus entry in some cell types, although results are contradictory. Members of the Tyro3 receptor tyrosine kinase family also seem to be cell entry factors in filovirus infection. Once attached, the virions are internalized through clathrin-dependent endocytosis and/or macropinocytosis. After internalization of the virus into the endosomes of the host cell, proteolysis of GP1 by two cysteine proteases, CTSB/cathepsin B and CTSL/cathepsin L removes the glycan cap and allows GP1 binding to the host entry receptor NPC1. NPC1-binding, Ca(2+) and acidic pH induce a conformational change of GP2, which unmasks its fusion peptide and permit membranes fusion. Its function is as follows. Acts as a class I viral fusion protein. Under the current model, the protein has at least 3 conformational states: pre-fusion native state, pre-hairpin intermediate state, and post-fusion hairpin state. During viral and target cell membrane fusion, the coiled coil regions (heptad repeats) assume a trimer-of-hairpins structure, positioning the fusion peptide in close proximity to the C-terminal region of the ectodomain. The formation of this structure appears to drive apposition and subsequent fusion of viral and target cell membranes. Responsible for penetration of the virus into the cell cytoplasm by mediating the fusion of the membrane of the endocytosed virus particle with the endosomal membrane. Low pH in endosomes induces an irreversible conformational change in GP2, releasing the fusion hydrophobic peptide. This chain is Envelope glycoprotein (GP), found in Reston ebolavirus (strain Philippines-96) (REBOV).